Here is a 549-residue protein sequence, read N- to C-terminus: Cation/acetate symporter ActP (549 aa).

A run of 13 helical transmembrane segments spans residues 33–53, 77–97, 103–123, 148–168, 183–203, 206–226, 262–282, 303–323, 355–375, 404–424, 428–448, 464–484, and 493–513; these read WQAI…TYWA, LAIA…ALVF, GLIY…LIAE, ILSA…QMVG, IAVV…GMLA, WVQI…AFMV, ISAL…PHIL, GFMG…IMLV, LFLG…VAGL, VSKI…VLFE, IAFM…PIIL, GGWL…TIWV, and IFPY…GIWF.

Belongs to the sodium:solute symporter (SSF) (TC 2.A.21) family.

The protein localises to the cell inner membrane. Functionally, transports acetate. This is Cation/acetate symporter ActP from Salmonella gallinarum (strain 287/91 / NCTC 13346).